The chain runs to 481 residues: Multiple inositol polyphosphate phosphatase 1 (481 aa).

The first 30 residues, 1–30 (MLRGARSHLPASVAPAAVLAAALLSSFARC), serve as a signal peptide directing secretion. Residue His-89 is part of the active site. N-linked (GlcNAc...) asparagine glycosylation is found at Asn-236 and Asn-475. A Prevents secretion from ER motif is present at residues 478-481 (SDEL).

It belongs to the histidine acid phosphatase family. MINPP1 subfamily. Post-translationally, N-glycosylated. In terms of tissue distribution, widely expressed with highest levels in kidney, intestine, thymus and liver.

The protein localises to the endoplasmic reticulum lumen. Its subcellular location is the secreted. The protein resides in the cell membrane. The enzyme catalyses 1D-myo-inositol hexakisphosphate + H2O = 1D-myo-inositol 1,2,4,5,6-pentakisphosphate + phosphate. It carries out the reaction 1D-myo-inositol 1,2,4,5,6-pentakisphosphate + H2O = 1D-myo-inositol 1,2,5,6-tetrakisphosphate + phosphate. It catalyses the reaction 1D-myo-inositol 1,2,5,6-tetrakisphosphate + H2O = 1D-myo-inositol 1,2,6-trisphosphate + phosphate. The catalysed reaction is 1D-myo-inositol 1,2,6-trisphosphate + H2O = 1D-myo-inositol 1,2-bisphosphate + phosphate. The enzyme catalyses 1D-myo-inositol 1,2-bisphosphate + H2O = 1D-myo-inositol 2-phosphate + phosphate. It carries out the reaction 1D-myo-inositol hexakisphosphate + H2O = 1D-myo-inositol 1,2,3,5,6-pentakisphosphate + phosphate. It catalyses the reaction 1D-myo-inositol 1,2,3,5,6-pentakisphosphate + H2O = 1D-myo-inositol 1,2,3,6-tetrakisphosphate + phosphate. The catalysed reaction is 1D-myo-inositol 1,2,3,6-tetrakisphosphate + H2O = 1D-myo-inositol 1,2,3-trisphosphate + phosphate. The enzyme catalyses 1D-myo-inositol 1,2,3-trisphosphate + H2O = 1D-myo-inositol 2,3-bisphosphate + phosphate. It carries out the reaction 1D-myo-inositol 2,3-bisphosphate + H2O = 1D-myo-inositol 2-phosphate + phosphate. It catalyses the reaction 1D-myo-inositol 1,3,4,5,6-pentakisphosphate + H2O = 1D-myo-inositol 1,4,5,6-tetrakisphosphate + phosphate. The catalysed reaction is 1D-myo-inositol 1,4,5,6-tetrakisphosphate + H2O = 1D-myo-inositol 1,4,5-trisphosphate + phosphate. The enzyme catalyses (2R)-2,3-bisphosphoglycerate + H2O = (2R)-2-phosphoglycerate + phosphate. Its function is as follows. Multiple inositol polyphosphate phosphatase that hydrolyzes 1D-myo-inositol 1,3,4,5,6-pentakisphosphate (InsP5[2OH]) and 1D-myo-inositol hexakisphosphate (InsP6) to a range of less phosphorylated inositol phosphates. This regulates the availability of these various small molecule second messengers and metal chelators which control many aspects of cell physiology. Has a weak in vitro activity towards 1D-myo-inositol 1,4,5-trisphosphate which is unlikely to be physiologically relevant. By regulating intracellular inositol polyphosphates pools, which act as metal chelators, it may control the availability of intracellular calcium and iron, which are important for proper neuronal development and homeostasis. May have a dual substrate specificity, and function as a 2,3-bisphosphoglycerate 3-phosphatase hydrolyzing 2,3-bisphosphoglycerate to 2-phosphoglycerate. 2,3-bisphosphoglycerate (BPG) is formed as part of the Rapoport-Luebering glycolytic bypass and is a regulator of systemic oxygen homeostasis as the major allosteric effector of hemoglobin. The sequence is that of Multiple inositol polyphosphate phosphatase 1 from Mus musculus (Mouse).